The primary structure comprises 569 residues: Potassium-transporting ATPase potassium-binding subunit (569 aa).

Helical transmembrane passes span Leu-3–Leu-23, Ala-68–Leu-88, Val-136–Val-156, Val-179–Val-199, Leu-259–Val-279, His-284–Tyr-304, Gly-384–Gly-404, Ala-422–Val-442, Ile-490–Gly-510, and Leu-534–Leu-554.

It belongs to the KdpA family. In terms of assembly, the system is composed of three essential subunits: KdpA, KdpB and KdpC.

The protein resides in the cell inner membrane. Functionally, part of the high-affinity ATP-driven potassium transport (or Kdp) system, which catalyzes the hydrolysis of ATP coupled with the electrogenic transport of potassium into the cytoplasm. This subunit binds the periplasmic potassium ions and delivers the ions to the membrane domain of KdpB through an intramembrane tunnel. This is Potassium-transporting ATPase potassium-binding subunit from Nitratidesulfovibrio vulgaris (strain ATCC 29579 / DSM 644 / CCUG 34227 / NCIMB 8303 / VKM B-1760 / Hildenborough) (Desulfovibrio vulgaris).